The following is a 436-amino-acid chain: Glutamyl-tRNA reductase (436 aa).

Substrate-binding positions include 56–59 (TCNR), serine 114, 119–121 (EAQ), and glutamine 125. The active-site Nucleophile is the cysteine 57. 194–199 (GAGEMI) serves as a coordination point for NADP(+).

It belongs to the glutamyl-tRNA reductase family. As to quaternary structure, homodimer.

It carries out the reaction (S)-4-amino-5-oxopentanoate + tRNA(Glu) + NADP(+) = L-glutamyl-tRNA(Glu) + NADPH + H(+). It participates in porphyrin-containing compound metabolism; protoporphyrin-IX biosynthesis; 5-aminolevulinate from L-glutamyl-tRNA(Glu): step 1/2. In terms of biological role, catalyzes the NADPH-dependent reduction of glutamyl-tRNA(Glu) to glutamate 1-semialdehyde (GSA). This Acidovorax sp. (strain JS42) protein is Glutamyl-tRNA reductase.